A 64-amino-acid polypeptide reads, in one-letter code: Translation machinery-associated protein 7 homolog (64 aa).

Residues 1–64 (MSGREGGKKK…QGGIKKSGKK (64 aa)) form a disordered region. A compositionally biased stretch (basic and acidic residues) spans 27–44 (VAFKQKQKEQQKALDAAK).

The protein belongs to the TMA7 family.

This chain is Translation machinery-associated protein 7 homolog, found in Anopheles funestus (African malaria mosquito).